The sequence spans 146 residues: Dihydroneopterin aldolase 1 (146 aa).

Substrate-binding positions include Glu-41, Tyr-73, and 92-93 (LE). Lys-119 (proton donor/acceptor) is an active-site residue.

This sequence belongs to the DHNA family. In terms of assembly, homooctamer. Forms a hollow cylinder assembled from two ring-shaped tetramers. Expressed in roots, leaves, stems and siliques.

The enzyme catalyses 7,8-dihydroneopterin = 6-hydroxymethyl-7,8-dihydropterin + glycolaldehyde. The protein operates within cofactor biosynthesis; tetrahydrofolate biosynthesis; 2-amino-4-hydroxy-6-hydroxymethyl-7,8-dihydropteridine diphosphate from 7,8-dihydroneopterin triphosphate: step 3/4. In terms of biological role, catalyzes the conversion of 7,8-dihydroneopterin into 6-hydroxymethyl-7,8-dihydropterin, a biosynthetic precursor of the vitamin tetrahydrofolate. Can use L-threo-dihydroneopterin and D-erythro-dihydroneopterin as substrates for the formation of 6-hydroxymethyldihydropterin, but it can also catalyze the epimerization of carbon 2' of dihydroneopterin and dihydromonapterin. The protein is Dihydroneopterin aldolase 1 of Arabidopsis thaliana (Mouse-ear cress).